A 39-amino-acid chain; its full sequence is Photosystem II reaction center protein X (39 aa).

The helical transmembrane segment at 10–30 threads the bilayer; the sequence is SSLVWAAVIVVIPAAVALVLI.

It belongs to the PsbX family. Type 1 subfamily. As to quaternary structure, PSII is composed of 1 copy each of membrane proteins PsbA, PsbB, PsbC, PsbD, PsbE, PsbF, PsbH, PsbI, PsbJ, PsbK, PsbL, PsbM, PsbT, PsbX, PsbY, Psb30/Ycf12, peripheral proteins PsbO, CyanoQ (PsbQ), PsbU, PsbV and a large number of cofactors. It forms dimeric complexes.

Its subcellular location is the cellular thylakoid membrane. Functionally, involved in the binding and/or turnover of quinones at the Q(B) site of photosystem II (PSII). PSII is a light-driven water plastoquinone oxidoreductase, using light energy to abstract electrons from H(2)O, generating a proton gradient subsequently used for ATP formation. The chain is Photosystem II reaction center protein X from Prochlorococcus marinus (strain MIT 9303).